The following is a 207-amino-acid chain: Cytochrome c biogenesis ATP-binding export protein CcmA (207 aa).

The region spanning 4 to 207 is the ABC transporter domain; the sequence is LEARELLCER…RISLTQTGAA (204 aa). 36-43 serves as a coordination point for ATP; the sequence is GSNGAGKT.

The protein belongs to the ABC transporter superfamily. CcmA exporter (TC 3.A.1.107) family. As to quaternary structure, the complex is composed of two ATP-binding proteins (CcmA) and two transmembrane proteins (CcmB).

The protein localises to the cell inner membrane. It catalyses the reaction heme b(in) + ATP + H2O = heme b(out) + ADP + phosphate + H(+). In terms of biological role, part of the ABC transporter complex CcmAB involved in the biogenesis of c-type cytochromes; once thought to export heme, this seems not to be the case, but its exact role is uncertain. Responsible for energy coupling to the transport system. This Escherichia coli (strain UTI89 / UPEC) protein is Cytochrome c biogenesis ATP-binding export protein CcmA.